Consider the following 507-residue polypeptide: RNA-splicing ligase RtcB homolog (507 aa).

Residues aspartate 121, cysteine 124, histidine 229, histidine 261, and histidine 355 each coordinate Mn(2+). Position 228 to 232 (228 to 232 (NHYGE)) interacts with GMP. Residues 355–356 (HN), 404–407 (GGTM), serine 411, 430–433 (HGSG), and lysine 506 each bind GMP. Residue histidine 430 is the GMP-histidine intermediate of the active site.

This sequence belongs to the RtcB family. Catalytic component of the tRNA-splicing ligase complex. The cofactor is Mn(2+).

The catalysed reaction is a 3'-end 3'-phospho-ribonucleotide-RNA + a 5'-end dephospho-ribonucleoside-RNA + GTP = a ribonucleotidyl-ribonucleotide-RNA + GMP + diphosphate. The enzyme catalyses a 3'-end 2',3'-cyclophospho-ribonucleotide-RNA + a 5'-end dephospho-ribonucleoside-RNA + GTP + H2O = a ribonucleotidyl-ribonucleotide-RNA + GMP + diphosphate + H(+). Functionally, catalytic subunit of the tRNA-splicing ligase complex that acts by directly joining spliced tRNA halves to mature-sized tRNAs by incorporating the precursor-derived splice junction phosphate into the mature tRNA as a canonical 3',5'-phosphodiester. May act as an RNA ligase with broad substrate specificity, and may function toward other RNAs. In Theileria parva (East coast fever infection agent), this protein is RNA-splicing ligase RtcB homolog.